A 133-amino-acid chain; its full sequence is NLP effector protein 14 (133 aa).

Positions 1–9 match the Conserved undecapeptide motifI I motif; the sequence is MYSWYFPKD. A Hepta-peptide GHRHDWE motif II motif is present at residues 16-22; that stretch reads GHRHDWE.

Belongs to the Necrosis inducing protein (NPP1) family.

The protein localises to the secreted. Functionally, secreted effector that contributes strongly to virulence during infection by P.capsici. Causes large necrotic areas in both host C.annuum and non-host N.benthamiana. The protein is NLP effector protein 14 of Phytophthora capsici.